Consider the following 451-residue polypeptide: tRNA-2-methylthio-N(6)-dimethylallyladenosine synthase (451 aa).

One can recognise an MTTase N-terminal domain in the interval 1 to 116 (MTYFFETYGC…LPQIFDEIKA (116 aa)). The [4Fe-4S] cluster site is built by Cys10, Cys46, Cys79, Cys162, Cys166, and Cys169. Residues 148-384 (SPKSFQSYVP…IDLQLKITAK (237 aa)) form the Radical SAM core domain. Residues 387–451 (KAKLGKKVDI…KGKTFRANLN (65 aa)) enclose the TRAM domain.

This sequence belongs to the methylthiotransferase family. MiaB subfamily. In terms of assembly, monomer. The cofactor is [4Fe-4S] cluster.

It is found in the cytoplasm. It catalyses the reaction N(6)-dimethylallyladenosine(37) in tRNA + (sulfur carrier)-SH + AH2 + 2 S-adenosyl-L-methionine = 2-methylsulfanyl-N(6)-dimethylallyladenosine(37) in tRNA + (sulfur carrier)-H + 5'-deoxyadenosine + L-methionine + A + S-adenosyl-L-homocysteine + 2 H(+). Catalyzes the methylthiolation of N6-(dimethylallyl)adenosine (i(6)A), leading to the formation of 2-methylthio-N6-(dimethylallyl)adenosine (ms(2)i(6)A) at position 37 in tRNAs that read codons beginning with uridine. This chain is tRNA-2-methylthio-N(6)-dimethylallyladenosine synthase, found in Treponema denticola (strain ATCC 35405 / DSM 14222 / CIP 103919 / JCM 8153 / KCTC 15104).